Here is a 177-residue protein sequence, read N- to C-terminus: UPF0178 protein TP_0845 (177 aa).

The disordered stretch occupies residues Glu155 to Arg177.

Belongs to the UPF0178 family.

The protein is UPF0178 protein TP_0845 of Treponema pallidum (strain Nichols).